Here is an 840-residue protein sequence, read N- to C-terminus: Homeobox-leucine zipper protein HOX9 (840 aa).

2 disordered regions span residues 1–26 (MAAA…AGMD) and 135–160 (NPSL…DASN). Over residues 12–21 (GSDGGGGGYD) the composition is skewed to gly residues. A DNA-binding region (homeobox) is located at residues 26 to 89 (DSGKYVRYTP…NRRCRDKQRK (64 aa)). Residues 86–135 (KQRKEASRLQAVNRKLTAMNKLLMEENERLQKQVSQLVHENAYMKQQLQN) are a coiled coil. An START domain is found at 157 to 385 (DASNPSGLLT…IAQETSGEVV (229 aa)).

This sequence belongs to the HD-ZIP homeobox family. Class III subfamily. Expressed in seedlings, roots, stems, leaf sheaths and blades and panicles.

Its subcellular location is the nucleus. Probable transcription factor. The sequence is that of Homeobox-leucine zipper protein HOX9 (HOX9) from Oryza sativa subsp. japonica (Rice).